We begin with the raw amino-acid sequence, 85 residues long: MKVTLIAILTCAAVLVLHTTAAEELEAESQLMEVGMPDTELAAVDEERLFECSFSCEIEKEGDKPCKKKKCKGGWKCKFNMCVKV.

An N-terminal signal peptide occupies residues 1–22 (MKVTLIAILTCAAVLVLHTTAA). Positions 23–48 (EELEAESQLMEVGMPDTELAAVDEER) are excised as a propeptide. Cystine bridges form between cysteine 52-cysteine 66, cysteine 56-cysteine 77, and cysteine 71-cysteine 82.

In terms of assembly, heterodimer composed of the two variants Ile-58 and Gln-58. In terms of tissue distribution, expressed by the venom gland.

The protein localises to the secreted. In terms of biological role, lethal neurotoxin that blocks neuromuscular transmission. Acts cooperatively to potentiate the activity of huwentoxin-I. This toxin is active against insects. This is U1-theraphotoxin-Hs1a from Cyriopagopus schmidti (Chinese bird spider).